The sequence spans 423 residues: Immunity-related GTPase family M protein 3 (423 aa).

The IRG-type G domain occupies 83-260; that stretch reads YRVKIAVTGD…PELRNTLQKD (178 aa). Residues 92-99, 117-121, and 200-202 contribute to the GTP site; these read DSGNGMSS, TGVVR, and KLD.

Belongs to the TRAFAC class dynamin-like GTPase superfamily. IRG family.

It is found in the endoplasmic reticulum. Its subcellular location is the cytoplasmic vesicle membrane. The protein resides in the lipid droplet. The catalysed reaction is GTP + H2O = GDP + phosphate + H(+). Immunity-related GTPase that plays important roles in host resistance to acute infection by protozoan, such as Toxoplasma gondii and Leishmania major. Acts as a dynamin-like protein that binds to intracellular membranes and promotes remodeling and trafficking of those membranes. Acts predominantly to restrict acute protozoan infection: expression is required in both hematopoietic and non-hematopoietic cellular compartments and is dependent on Stat1. Only plays a partial role in the control of latent Toxoplasma infection. Involved in the clearance of acute protozoan infections by regulating autophagy, possibly by promoting the fusion of phagosomes with lysosomes for efficient degradation of vacuoles containing parasites. Probably involved in membrane disruption of parasite-containing vacuoles. In addition to its role in resistance to acute infection by protozoan, also acts as a negative regulator of the integrated stress response (ISR) following coxsackievirus B3 infection. Promotes differentiation of activated CD8(+) T-cells. The chain is Immunity-related GTPase family M protein 3 from Mus musculus (Mouse).